A 439-amino-acid polypeptide reads, in one-letter code: Secreted RxLR effector protein 117 (439 aa).

The N-terminal stretch at 1 to 21 (MRGAYYVLAALLVVASSQIAA) is a signal peptide. The short motif at 48–65 (RYLRGGHDVHDDSANEER) is the RxLR-dEER element.

It belongs to the RxLR effector family.

It is found in the secreted. Its subcellular location is the host nucleus. In terms of biological role, secreted effector that acts as an elicitor that induces cell death in host plant cells. In Plasmopara viticola (Downy mildew of grapevine), this protein is Secreted RxLR effector protein 117.